A 255-amino-acid chain; its full sequence is MAVGKNKRLSRGKKGLKKKVVDPFTRKEWFDIKAPSTFENRNVGKTLVNKSTGLKNASDALKGRVVEVCLADLQGSEDHSFRKVKLRVDEVQGKNLLTNFHGMDFTTDKLRSMVRKWQTLIEANVTVKTSDDYVLRIFAIAFTRKQANQVKRHSYAQSSHIRAIRKVISEILTREVQNSTLAQLTSKLIPEVINKEIENATKDIFPLQNIHVRKVKLLKQPKFDVGALMALHGEGSGKEKGKKVSGFKDEVLETV.

Alanine 2 is subject to N-acetylalanine; partial. Serine 245 is subject to Phosphoserine. A Glycyl lysine isopeptide (Lys-Gly) (interchain with G-Cter in ubiquitin) cross-link involves residue lysine 248. Threonine 254 bears the Phosphothreonine mark.

The protein belongs to the eukaryotic ribosomal protein eS1 family. In terms of assembly, component of the small ribosomal subunit. Mature ribosomes consist of a small (40S) and a large (60S) subunit. The 40S subunit contains about 33 different proteins and 1 molecule of RNA (18S). The 60S subunit contains about 49 different proteins and 3 molecules of RNA (25S, 5.8S and 5S).

It localises to the cytoplasm. The protein is Small ribosomal subunit protein eS1B of Saccharomyces cerevisiae (strain JAY291) (Baker's yeast).